The following is a 544-amino-acid chain: Protein kinase dsk1 (544 aa).

The Protein kinase domain maps to 81 to 516 (YVVERKLGWG…AGYMSNSPWL (436 aa)). Residues 87–95 (LGWGHFSTV) and lysine 110 each bind ATP. Catalysis depends on aspartate 214, which acts as the Proton acceptor. Disordered regions lie at residues 235-299 (PATT…SSPF) and 316-341 (ISLRDSQKHNSHPNSPFSSGDNSLIL). Residues 237-254 (TTSSPTSNTSSSKTRNNT) show a composition bias toward low complexity. Composition is skewed to polar residues over residues 281–299 (KNPTKNSKPAGQVIPSSPF) and 327–337 (HPNSPFSSGDN).

The protein belongs to the protein kinase superfamily. Ser/Thr protein kinase family. Phosphorylated on Ser residue(s).

It is found in the cytoplasm. The protein resides in the nucleus. The enzyme catalyses L-seryl-[protein] + ATP = O-phospho-L-seryl-[protein] + ADP + H(+). It catalyses the reaction L-threonyl-[protein] + ATP = O-phospho-L-threonyl-[protein] + ADP + H(+). May play an important role in mitotic control by altering cellular location, degree of phosphorylation and kinase activity. Abundant expression accelerates the exit when cells are in M-phase and also delays the entry into mitosis when cells are in G2. Phosphorylates prp2 in vitro and so may have a role in co-ordinating pre-mRNA splicing with the progression of the cell division cycle. The chain is Protein kinase dsk1 (dsk1) from Schizosaccharomyces pombe (strain 972 / ATCC 24843) (Fission yeast).